A 402-amino-acid chain; its full sequence is Type II NADH:quinone oxidoreductase (402 aa).

Residues 12 to 16, 39 to 40, and Val-83 contribute to the FAD site; these read GAGYA and NK. The active site involves Glu-172. Residues Asp-302, 319–320, and Lys-379 each bind FAD; that span reads AQ.

It belongs to the NADH dehydrogenase family. In terms of assembly, homodimer in solution. Forms homotetramers; dimer of dimers. The cofactor is FAD.

The protein localises to the cell membrane. The catalysed reaction is a quinone + NADH + H(+) = a quinol + NAD(+). It catalyses the reaction a menaquinone + NADH + H(+) = a menaquinol + NAD(+). The enzyme catalyses a ubiquinone + NADH + H(+) = a ubiquinol + NAD(+). Its activity is regulated as follows. Inhibited by HQNO, a quinone derivative. Its function is as follows. Alternative, nonproton pumping NADH:quinone oxidoreductase that delivers electrons to the respiratory chain by oxidation of NADH and reduction of quinones, and contributes to the regeneration of NAD(+). Can use DMN, a menaquinone analog, 2,3-dimethoxy-5,6-dimethyl-benzoquinone (DDB), an ubiquinone analog, or 2,3,5,6-tetramethyl-1,4-benzoquinone (Duroquinone, DQ) a plastoquinone analog as electron acceptors. This is Type II NADH:quinone oxidoreductase from Staphylococcus aureus (strain NCTC 8325 / PS 47).